We begin with the raw amino-acid sequence, 93 residues long: Co-chaperonin GroES (93 aa).

It belongs to the GroES chaperonin family. In terms of assembly, heptamer of 7 subunits arranged in a ring. Interacts with the chaperonin GroEL.

It localises to the cytoplasm. Its function is as follows. Together with the chaperonin GroEL, plays an essential role in assisting protein folding. The GroEL-GroES system forms a nano-cage that allows encapsulation of the non-native substrate proteins and provides a physical environment optimized to promote and accelerate protein folding. GroES binds to the apical surface of the GroEL ring, thereby capping the opening of the GroEL channel. The protein is Co-chaperonin GroES of Streptococcus anginosus.